The primary structure comprises 320 residues: Cytochrome f (320 aa).

Positions 1–35 are cleaved as a signal peptide; the sequence is MNFFTHKKNNFGSFVTIFSFLVALGVTNLTPAAEA. Residues Tyr-36, Cys-56, Cys-59, and His-60 each contribute to the heme site. The chain crosses the membrane as a helical span at residues 286–306; it reads IQGLLVFFATVLFAQVLLVLK.

Belongs to the cytochrome f family. As to quaternary structure, the 4 large subunits of the cytochrome b6-f complex are cytochrome b6, subunit IV (17 kDa polypeptide, petD), cytochrome f and the Rieske protein, while the 4 small subunits are PetG, PetL, PetM and PetN. The complex functions as a dimer. It depends on heme as a cofactor.

It localises to the plastid. It is found in the chloroplast thylakoid membrane. Functionally, component of the cytochrome b6-f complex, which mediates electron transfer between photosystem II (PSII) and photosystem I (PSI), cyclic electron flow around PSI, and state transitions. The sequence is that of Cytochrome f from Tetradesmus obliquus (Green alga).